The primary structure comprises 205 residues: ITG-like peptide (205 aa).

The signal sequence occupies residues Met-1–Thr-15. Propeptides lie at residues Ala-16–Glu-188 and Met-202–Ala-205.

Expressed throughout the nervous system (at protein level).

The protein resides in the secreted. This chain is ITG-like peptide, found in Camponotus floridanus (Florida carpenter ant).